A 381-amino-acid polypeptide reads, in one-letter code: Cytochrome b (381 aa).

4 consecutive transmembrane segments (helical) span residues 34-54 (FGSL…MLAM), 78-99 (WMIR…YLHI), 114-134 (WNTG…GYVL), and 179-199 (FFAL…VHLT). Heme b is bound by residues H84 and H98. H183 and H197 together coordinate heme b. H202 contributes to the a ubiquinone binding site. 4 helical membrane-spanning segments follow: residues 227 to 247 (MKDL…AFFT), 289 to 309 (LGGV…PLLH), 321 to 341 (MSQI…WVGS), and 348 to 368 (FIII…FLFP).

This sequence belongs to the cytochrome b family. The cytochrome bc1 complex contains 11 subunits: 3 respiratory subunits (MT-CYB, CYC1 and UQCRFS1), 2 core proteins (UQCRC1 and UQCRC2) and 6 low-molecular weight proteins (UQCRH/QCR6, UQCRB/QCR7, UQCRQ/QCR8, UQCR10/QCR9, UQCR11/QCR10 and a cleavage product of UQCRFS1). This cytochrome bc1 complex then forms a dimer. Heme b serves as cofactor.

Its subcellular location is the mitochondrion inner membrane. Functionally, component of the ubiquinol-cytochrome c reductase complex (complex III or cytochrome b-c1 complex) that is part of the mitochondrial respiratory chain. The b-c1 complex mediates electron transfer from ubiquinol to cytochrome c. Contributes to the generation of a proton gradient across the mitochondrial membrane that is then used for ATP synthesis. This Nothoprocta perdicaria (Chilean tinamou) protein is Cytochrome b (MT-CYB).